Reading from the N-terminus, the 196-residue chain is ECF RNA polymerase sigma factor SigK (196 aa).

The segment at 39-105 is sigma-70 factor domain-2; it reads YDQTRARVYG…RAVDRVRSEQ (67 aa). The short motif at 62-65 is the Polymerase core binding element; that stretch reads ETTQ. Residues 142–191 form a sigma-70 factor domain-4 region; sequence CLDSLTDVQRECIQLAYYDGLTYAQVADRLAANLATIKSRMRDGIRALRK. A DNA-binding region (H-T-H motif) is located at residues 164–183; the sequence is YAQVADRLAANLATIKSRMR.

Belongs to the sigma-70 factor family. ECF subfamily. In terms of assembly, interacts transiently with the RNA polymerase catalytic core formed by RpoA, RpoB, RpoC and RpoZ (2 alpha, 1 beta, 1 beta' and 1 omega subunit) to form the RNA polymerase holoenzyme that can initiate transcription. Interacts (via sigma-70 factor domain 4) with anti-sigma-K factor RskA.

Functionally, sigma factors are initiation factors that promote the attachment of RNA polymerase to specific initiation sites and are then released. Extracytoplasmic function (ECF) sigma factors are held in an inactive form by an anti-sigma factor until released by regulated intramembrane proteolysis. The polypeptide is ECF RNA polymerase sigma factor SigK (sigK) (Mycolicibacterium vanbaalenii (strain DSM 7251 / JCM 13017 / BCRC 16820 / KCTC 9966 / NRRL B-24157 / PYR-1) (Mycobacterium vanbaalenii)).